The following is a 618-amino-acid chain: Sodium-coupled monocarboxylate transporter 2 (618 aa).

At 1–9 the chain is on the extracellular side; sequence MEVKNFAVW. A helical transmembrane segment spans residues 10–30; the sequence is DYVVFAALFFISSGIGVFFAI. At 31 to 47 the chain is on the cytoplasmic side; it reads KERKKATSREFLVGGRQ. The helical transmembrane segment at 48–68 threads the bilayer; that stretch reads MSFGPVGLSLTASFMSAVTVL. Residues 69 to 82 lie on the Extracellular side of the membrane; sequence GTPSEVYRFGASFL. Residues 83–103 form a helical membrane-spanning segment; the sequence is VFFIAYLFVILLTSELFLPVF. The Cytoplasmic portion of the chain corresponds to 104 to 128; sequence YRSGITSTYEYLQLRFNKPVRYAAT. The helical transmembrane segment at 129–149 threads the bilayer; the sequence is VIYIVQTILYTGVVVYAPALA. The Extracellular portion of the chain corresponds to 150–157; the sequence is LNQVTGFD. The helical transmembrane segment at 158–178 threads the bilayer; it reads LWGSVFATGIVCTFYCTLGGL. At 179–180 the chain is on the cytoplasmic side; it reads KA. The chain crosses the membrane as a helical span at residues 181 to 201; the sequence is VVWTDAFQMVVMIVGFLTVLI. The Extracellular segment spans residues 202-235; that stretch reads QGSTHAGGFHNVLEQSTNGSRLHIFDFDVDPLRR. Residues 236–256 form a helical membrane-spanning segment; sequence HTFWTITVGGTFTWLGIYGVN. Over 257-275 the chain is Cytoplasmic; the sequence is QSTIQRCISCKTEKHAKLA. The chain crosses the membrane as a helical span at residues 276 to 296; the sequence is LYFNLLGLWIILVCAVFSGLI. Over 297 to 321 the chain is Extracellular; the sequence is MYSHFKDCDPWTSGIISAPDQLMPY. Residues 322–342 form a helical membrane-spanning segment; it reads FVMEIFATMPGLPGLFVACAF. At 343 to 385 the chain is on the cytoplasmic side; that stretch reads SGTLSTVASSINALATVTFEDFVKSCFPHLSDKLSTWISKGLC. The helical transmembrane segment at 386–406 threads the bilayer; sequence LLFGVMCTSMAVAASVMGGVV. At 407–411 the chain is on the extracellular side; the sequence is QASLS. A helical transmembrane segment spans residues 412–432; the sequence is IHGMCGGPMLGLFSLGIVFPF. Topologically, residues 433–437 are cytoplasmic; the sequence is VNWKG. Residues 438–458 traverse the membrane as a helical segment; that stretch reads ALGGLLTGITLSFWVAIGAFI. The Extracellular portion of the chain corresponds to 459–504; it reads YPAPASKTWPLPLSTDQCIKSNVTATGPPVLSSRPGIADTWYSISY. N-linked (GlcNAc...) asparagine glycosylation is present at asparagine 480. Residues 505–525 traverse the membrane as a helical segment; sequence LYYSAVGCLGCIVAGVIISLI. The Cytoplasmic portion of the chain corresponds to 526-618; the sequence is TGRQRGEDIQ…NNMAFETTHF (93 aa).

This sequence belongs to the sodium:solute symporter (SSF) (TC 2.A.21) family.

It localises to the apical cell membrane. It catalyses the reaction (S)-lactate(out) + Na(+)(out) = (S)-lactate(in) + Na(+)(in). The enzyme catalyses nicotinate(out) + Na(+)(out) = nicotinate(in) + Na(+)(in). It carries out the reaction pyruvate(out) + Na(+)(out) = pyruvate(in) + Na(+)(in). The catalysed reaction is propanoate(out) + Na(+)(out) = propanoate(in) + Na(+)(in). It catalyses the reaction butanoate(out) + Na(+)(out) = butanoate(in) + Na(+)(in). The enzyme catalyses acetoacetate(out) + Na(+)(out) = acetoacetate(in) + Na(+)(in). Cotransport of monocarboxylates and nicotinate strongly inhibited by ibuprofen, fenoprofen and ketoprofen. Acts as an electroneutral and low-affinity sodium (Na(+))-dependent sodium-coupled solute transporter. Catalyzes the transport across the plasma membrane of many monocarboxylates such as lactate, pyruvate, nicotinate, propionate, butyrate and beta-D-hydroxybutyrate. May be responsible for the first step of reabsorption of monocarboxylates from the lumen of the proximal tubule of the kidney and the small intestine. May play also a role in monocarboxylates transport in the retina. The polypeptide is Sodium-coupled monocarboxylate transporter 2 (Homo sapiens (Human)).